Here is a 182-residue protein sequence, read N- to C-terminus: MLEKYKNSKKLSRDLPQINDRIKFPKVRVIDDEGEQLGIFAPEAAIQLATKQGLDLVLVSDKSDPPVCRILDYGKYKFTQEKRAREAKKKQHNSSIKEVKMRYKIEEHDYKVRINQASKFLQSGDKVKATITFRGREIQHSNLAINLLNKMAADLVTIAEIQQAPSRDGRNVIMLLSPKKVN.

It belongs to the IF-3 family. As to quaternary structure, monomer.

It is found in the plastid. Its subcellular location is the chloroplast. Its function is as follows. IF-3 binds to the 30S ribosomal subunit and shifts the equilibrium between 70S ribosomes and their 50S and 30S subunits in favor of the free subunits, thus enhancing the availability of 30S subunits on which protein synthesis initiation begins. The chain is Translation initiation factor IF-3, chloroplastic from Porphyra purpurea (Red seaweed).